Reading from the N-terminus, the 239-residue chain is MNPELFAETLSKYNFKLSPVQEQQFKTYFKELVRVNEHVNLTRITDEDEVYLKHFYDSVTPLLLWPEVFAEGAKLCDVGAGAGFPSLPIKILRPDLEVTIVDSLGKRLNFLSDLLEKLGIEGVNLVHGRAEDVGQNPDYREKFDLVTARAVARMSVLSEYCLPLAKVGGKFLALKGPRADEELEDAKSALEKLGGEVVFTRVITLPGSAEVRTLVLVDKVKATPGKYPRQAGTPNRKPL.

Residues G79, F84, 130 to 131 (AE), and R149 each bind S-adenosyl-L-methionine.

It belongs to the methyltransferase superfamily. RNA methyltransferase RsmG family.

The protein resides in the cytoplasm. Specifically methylates the N7 position of a guanine in 16S rRNA. The polypeptide is Ribosomal RNA small subunit methyltransferase G (Lactobacillus delbrueckii subsp. bulgaricus (strain ATCC BAA-365 / Lb-18)).